We begin with the raw amino-acid sequence, 178 residues long: Stage V sporulation protein T (178 aa).

The SpoVT-AbrB domain maps to 5-51; the sequence is GIVRRIDDLGRVVIPKEIRRTLRIREGDPLEIFVDRDGEVILKKYSP. Residues 56-178 are GAF-like; it reads GDFAKEYADA…AGFLARQMEQ (123 aa).

It to B.subtilis AbrB and Abh. In terms of assembly, homotetramer. Two monomers dimerize via their N-terminal swapped-hairpin domains. These dimers further associate into tetramers through helical interactions between their C-terminal GAF-like domains.

Its function is as follows. Transcriptional factor that positively regulates or negatively the expression of a large number of forespore-specific sigma G-dependent genes. May provide a mechanism of feedback control that is important for forespore development. SpoVT levels during spore formation have a major impact on the germination and the resistance of the resultant spores. The chain is Stage V sporulation protein T from Bacillus subtilis (strain 168).